The sequence spans 194 residues: 13S globulin basic chain (194 aa).

Residues 13-162 (ENIKSPQEAD…SFQISSEEAE (150 aa)) form the Cupin type-1 domain.

It belongs to the 11S seed storage protein (globulins) family. As to quaternary structure, hexamer; each subunit is composed of an acidic and a basic chain derived from a single precursor and linked by a disulfide bond. Cotyledons and endosperm protein bodies.

Its function is as follows. Seed storage protein with a relatively high level of Lys and Met. The sequence is that of 13S globulin basic chain from Fagopyrum esculentum (Common buckwheat).